A 170-amino-acid chain; its full sequence is Adenine phosphoribosyltransferase (170 aa).

It belongs to the purine/pyrimidine phosphoribosyltransferase family. As to quaternary structure, homodimer.

The protein localises to the cytoplasm. The catalysed reaction is AMP + diphosphate = 5-phospho-alpha-D-ribose 1-diphosphate + adenine. The protein operates within purine metabolism; AMP biosynthesis via salvage pathway; AMP from adenine: step 1/1. Its function is as follows. Catalyzes a salvage reaction resulting in the formation of AMP, that is energically less costly than de novo synthesis. This Maridesulfovibrio salexigens (strain ATCC 14822 / DSM 2638 / NCIMB 8403 / VKM B-1763) (Desulfovibrio salexigens) protein is Adenine phosphoribosyltransferase.